The sequence spans 111 residues: Cytochrome c (111 aa).

Residue A1 is modified to N-acetylalanine. The heme c site is built by C22, C25, and H26. An N6,N6,N6-trimethyllysine modification is found at K80. Position 88 (M88) interacts with heme c. K94 bears the N6,N6,N6-trimethyllysine mark.

The protein belongs to the cytochrome c family. Binds 1 heme c group covalently per subunit.

Its subcellular location is the mitochondrion intermembrane space. Its function is as follows. Electron carrier protein. The oxidized form of the cytochrome c heme group can accept an electron from the heme group of the cytochrome c1 subunit of cytochrome reductase. Cytochrome c then transfers this electron to the cytochrome oxidase complex, the final protein carrier in the mitochondrial electron-transport chain. This Sesamum indicum (Oriental sesame) protein is Cytochrome c.